The sequence spans 77 residues: U14-theraphotoxin-Cg1c (77 aa).

The N-terminal stretch at 1 to 21 is a signal peptide; the sequence is MNTSDPPAVLRIAAITLLCTA. The propeptide occupies 22–49; the sequence is SESVEQNPLIPFENAVLGSYAKMASEKR. 2 cysteine pairs are disulfide-bonded: Cys-50–Cys-64 and Cys-57–Cys-69.

Belongs to the neurotoxin 10 (Hwtx-1) family. 65 (Jztx-21) subfamily. In terms of tissue distribution, expressed by the venom gland.

It is found in the secreted. Probable ion channel inhibitor. This chain is U14-theraphotoxin-Cg1c, found in Chilobrachys guangxiensis (Chinese earth tiger tarantula).